Reading from the N-terminus, the 349-residue chain is tRNA N6-adenosine threonylcarbamoyltransferase (349 aa).

Positions 117 and 121 each coordinate Fe cation. Substrate-binding positions include 140–144, Asp-173, Gly-186, and Asn-284; that span reads LVSGG. Position 312 (Asp-312) interacts with Fe cation.

The protein belongs to the KAE1 / TsaD family. Requires Fe(2+) as cofactor.

The protein resides in the cytoplasm. It carries out the reaction L-threonylcarbamoyladenylate + adenosine(37) in tRNA = N(6)-L-threonylcarbamoyladenosine(37) in tRNA + AMP + H(+). Functionally, required for the formation of a threonylcarbamoyl group on adenosine at position 37 (t(6)A37) in tRNAs that read codons beginning with adenine. Is involved in the transfer of the threonylcarbamoyl moiety of threonylcarbamoyl-AMP (TC-AMP) to the N6 group of A37, together with TsaE and TsaB. TsaD likely plays a direct catalytic role in this reaction. This is tRNA N6-adenosine threonylcarbamoyltransferase from Psychrobacter arcticus (strain DSM 17307 / VKM B-2377 / 273-4).